Reading from the N-terminus, the 506-residue chain is Probable E3 ubiquitin-protein ligase ARI14 (506 aa).

Residues 79-308 (PDSSSEISLE…VDSGFCIKTE (230 aa)) are TRIAD supradomain. The RING-type 1 zinc finger occupies 83 to 140 (SEISLETDVYEFDGDNDLISMPFCSHKFDSKYWREYLEKNFYYVEKIQTTISCPDQDC). Zn(2+) contacts are provided by Cys106, His108, Cys135, Cys140, Cys180, Cys185, Cys207, Cys209, Cys214, Cys217, His222, Cys227, Cys258, Cys261, Cys277, Cys279, Cys284, Cys287, His294, and Cys304. The IBR-type zinc finger occupies 158 to 227 (EMYERYIWRS…RLESHRPVSC (70 aa)). The RING-type 2; atypical zinc-finger motif lies at 258–287 (CPHCLCSLESDTKMPQFLTCVCRLRFCSRC). The RanBP2-type zinc finger occupies 462–492 (GTGPFWYCDRCTYANTWEDNECEMCYDDSAS).

This sequence belongs to the RBR family. Ariadne subfamily. It depends on Zn(2+) as a cofactor. Mostly expressed in closed flowers and, to a lower extent, in pollen.

It carries out the reaction [E2 ubiquitin-conjugating enzyme]-S-ubiquitinyl-L-cysteine + [acceptor protein]-L-lysine = [E2 ubiquitin-conjugating enzyme]-L-cysteine + [acceptor protein]-N(6)-ubiquitinyl-L-lysine.. It participates in protein modification; protein ubiquitination. In terms of biological role, might act as an E3 ubiquitin-protein ligase, or as part of E3 complex, which accepts ubiquitin from specific E2 ubiquitin-conjugating enzymes and then transfers it to substrates. Negatively regulates male gametophyte formation and double fertilization. This Arabidopsis thaliana (Mouse-ear cress) protein is Probable E3 ubiquitin-protein ligase ARI14.